The chain runs to 331 residues: Anthranilate phosphoribosyltransferase (331 aa).

Residues glycine 78, 81–82 (GD), threonine 86, 88–91 (NVST), 106–114 (KHGNYSVSS), and serine 118 contribute to the 5-phospho-alpha-D-ribose 1-diphosphate site. Anthranilate is bound at residue glycine 78. Serine 90 is a Mg(2+) binding site. Asparagine 109 is an anthranilate binding site. Arginine 164 contributes to the anthranilate binding site. Aspartate 222 and glutamate 223 together coordinate Mg(2+).

This sequence belongs to the anthranilate phosphoribosyltransferase family. Homodimer. Mg(2+) serves as cofactor.

The enzyme catalyses N-(5-phospho-beta-D-ribosyl)anthranilate + diphosphate = 5-phospho-alpha-D-ribose 1-diphosphate + anthranilate. Its pathway is amino-acid biosynthesis; L-tryptophan biosynthesis; L-tryptophan from chorismate: step 2/5. In terms of biological role, catalyzes the transfer of the phosphoribosyl group of 5-phosphorylribose-1-pyrophosphate (PRPP) to anthranilate to yield N-(5'-phosphoribosyl)-anthranilate (PRA). In Haloarcula marismortui (strain ATCC 43049 / DSM 3752 / JCM 8966 / VKM B-1809) (Halobacterium marismortui), this protein is Anthranilate phosphoribosyltransferase.